The following is a 228-amino-acid chain: Cytochrome b6-f complex iron-sulfur subunit 2, chloroplastic (228 aa).

Residues 1–49 constitute a chloroplast transit peptide; it reads MASSTLSPVTQLCSSKSGLSSVSQCLLLKPMKINSHGLGKDKRMKVKCM. A helical transmembrane segment spans residues 71-91; that stretch reads LLLGALSLPTAGMLVPYATFF. Residues 115–211 form the Rieske domain; sequence ASEWLKTHPP…ADIDDGKVVF (97 aa). The [2Fe-2S] cluster site is built by Cys-157, His-159, Cys-175, and His-178. Cys-162 and Cys-177 are oxidised to a cystine.

The protein belongs to the Rieske iron-sulfur protein family. The 4 large subunits of the cytochrome b6-f complex are cytochrome b6, subunit IV (17 kDa polypeptide, petD), cytochrome f and the Rieske protein, while the 4 small subunits are petG, petL, petM and petN. The complex functions as a dimer. Requires [2Fe-2S] cluster as cofactor.

The protein localises to the plastid. Its subcellular location is the chloroplast thylakoid membrane. It catalyses the reaction 2 oxidized [plastocyanin] + a plastoquinol + 2 H(+)(in) = 2 reduced [plastocyanin] + a plastoquinone + 4 H(+)(out). Its function is as follows. Component of the cytochrome b6-f complex, which mediates electron transfer between photosystem II (PSII) and photosystem I (PSI), cyclic electron flow around PSI, and state transitions. The sequence is that of Cytochrome b6-f complex iron-sulfur subunit 2, chloroplastic (petC2) from Nicotiana tabacum (Common tobacco).